Reading from the N-terminus, the 118-residue chain is Large ribosomal subunit protein mL53 (118 aa).

The segment at 99–118 (AAAASAPGADKVAPGTSTRR) is disordered.

It belongs to the mitochondrion-specific ribosomal protein mL53 family. Component of the mitochondrial ribosome large subunit (39S) which comprises a 16S rRNA and about 50 distinct proteins.

It localises to the mitochondrion. The sequence is that of Large ribosomal subunit protein mL53 (Mrpl53) from Mus musculus (Mouse).